A 307-amino-acid chain; its full sequence is MARTPDDSWDLASSVGATATMVAAGRAVASADPDPLINDPYAEPLVRAVGLDFFTRMLDGELDLSVFPDSSPERAQAMIDGMAVRTRFFDDCCLAAASAGVRQVVILAAGLDARTYRLPWPDGTVVYELDQPDVIAFKTQTLRNLGAEPAATQRPVPVDLREDWPAALRAAGFDATRPTAWLAEGLLIYLPPEAQDALFDTVTALSAPGSTLATEYVPGIVDFDGAKARALSEPLREHGLDIDMPSLVYTGARTPVMDHLRGAGWQVSGTARAELFARFGRPLPQDADGTDPLGEIVYVSATLAADA.

S-adenosyl-L-methionine contacts are provided by residues Asp-130 and 159–160 (DL).

It belongs to the UPF0677 family.

Exhibits S-adenosyl-L-methionine-dependent methyltransferase activity. This chain is Putative S-adenosyl-L-methionine-dependent methyltransferase Mflv_5025, found in Mycolicibacterium gilvum (strain PYR-GCK) (Mycobacterium gilvum (strain PYR-GCK)).